A 122-amino-acid polypeptide reads, in one-letter code: Ribonuclease pancreatic (122 aa).

A compositionally biased stretch (basic and acidic residues) spans 1-16 (ETPAEKFQRQHMDTEH). Residues 1 to 20 (ETPAEKFQRQHMDTEHSTAS) are disordered. Substrate-binding residues include Lys6 and Arg9. His11 serves as the catalytic Proton acceptor. Disulfide bonds link Cys25–Cys83, Cys39–Cys94, Cys57–Cys109, and Cys64–Cys71. Substrate-binding positions include 40 to 44 (KPLNT), Lys65, and Arg84. Catalysis depends on His117, which acts as the Proton donor.

This sequence belongs to the pancreatic ribonuclease family. In terms of assembly, monomer. Interacts with and forms tight 1:1 complexes with RNH1. Dimerization of two such complexes may occur. Interaction with RNH1 inhibits this protein. In terms of processing, not glycosylated although the sequence N-V-T, a recognition site for carbohydrate attachment, is present. Pancreas.

It is found in the secreted. The catalysed reaction is an [RNA] containing cytidine + H2O = an [RNA]-3'-cytidine-3'-phosphate + a 5'-hydroxy-ribonucleotide-3'-[RNA].. The enzyme catalyses an [RNA] containing uridine + H2O = an [RNA]-3'-uridine-3'-phosphate + a 5'-hydroxy-ribonucleotide-3'-[RNA].. In terms of biological role, endonuclease that catalyzes the cleavage of RNA on the 3' side of pyrimidine nucleotides. Acts on single-stranded and double-stranded RNA. This is Ribonuclease pancreatic (RNASE1) from Osphranter rufus (Red kangaroo).